Consider the following 206-residue polypeptide: Large ribosomal subunit protein uL3 (206 aa).

It belongs to the universal ribosomal protein uL3 family. Part of the 50S ribosomal subunit. Forms a cluster with proteins L14 and L19.

In terms of biological role, one of the primary rRNA binding proteins, it binds directly near the 3'-end of the 23S rRNA, where it nucleates assembly of the 50S subunit. In Thermus thermophilus (strain ATCC BAA-163 / DSM 7039 / HB27), this protein is Large ribosomal subunit protein uL3.